We begin with the raw amino-acid sequence, 331 residues long: B-box zinc finger protein 21 (331 aa).

The Zn(2+) site is built by Cys5, Cys8, Cys28, His34, Cys60, Cys63, Cys83, and His93. The B box-type 1; atypical zinc finger occupies 5 to 47; it reads CDVCDKEEASVFCTADEASLCGGCDHQVHHANKLASKHLRFSL. Residues 60–102 form a B box-type 2; atypical zinc finger; sequence CDICQDKKALLFCQQDRAILCKDCDSSIHAANEHTKKHDRFLL. Low complexity-rich tracts occupy residues 115-126 and 228-238; these read KPTSKSSSSSSS and NNNNNNNNNNN. 2 disordered regions span residues 115–167 and 209–241; these read KPTS…GGDA and DDDG…NTVS.

As to quaternary structure, interacts with COP1, HY5 and BBX32. Interacts with FLZ1.

It is found in the nucleus. Functionally, transcription activator that acts as a positive regulator of seedling photomorphogenesis. Acts downstream of COP1 and play an important role in early and long-term adjustment of the shade avoidance syndrome (SAS) responses in natural environments. This Arabidopsis thaliana (Mouse-ear cress) protein is B-box zinc finger protein 21.